The following is a 134-amino-acid chain: Profilin-3 (134 aa).

A disulfide bridge connects residues cysteine 13 and cysteine 118. An Involved in PIP2 interaction motif is present at residues 84–100 (AVIRGKKGSGGITIKKT). The residue at position 114 (threonine 114) is a Phosphothreonine.

It belongs to the profilin family. As to quaternary structure, occurs in many kinds of cells as a complex with monomeric actin in a 1:1 ratio. Post-translationally, phosphorylated by MAP kinases.

The protein resides in the cytoplasm. It localises to the cytoskeleton. Binds to actin and affects the structure of the cytoskeleton. At high concentrations, profilin prevents the polymerization of actin, whereas it enhances it at low concentrations. In Olea europaea (Common olive), this protein is Profilin-3.